A 204-amino-acid chain; its full sequence is Guanylate kinase (204 aa).

One can recognise a Guanylate kinase-like domain in the interval 16–196; that stretch reads AKVIIFSAPS…AKAHALKVIK (181 aa). 23–30 serves as a coordination point for ATP; that stretch reads APSGSGKS.

It belongs to the guanylate kinase family.

Its subcellular location is the cytoplasm. The enzyme catalyses GMP + ATP = GDP + ADP. Essential for recycling GMP and indirectly, cGMP. The chain is Guanylate kinase from Bacteroides fragilis (strain ATCC 25285 / DSM 2151 / CCUG 4856 / JCM 11019 / LMG 10263 / NCTC 9343 / Onslow / VPI 2553 / EN-2).